The following is a 332-amino-acid chain: tRNA dimethylallyltransferase (332 aa).

ATP is bound at residue 14 to 21 (GPTASGKT). 16 to 21 (TASGKT) contributes to the substrate binding site. Residues 39 to 42 (DSMQ) are interaction with substrate tRNA. A disordered region spans residues 312–332 (NKRSSNHDCKRKHPRPSTREL). The segment covering 320 to 332 (CKRKHPRPSTREL) has biased composition (basic residues).

Belongs to the IPP transferase family. Monomer. It depends on Mg(2+) as a cofactor.

It carries out the reaction adenosine(37) in tRNA + dimethylallyl diphosphate = N(6)-dimethylallyladenosine(37) in tRNA + diphosphate. Functionally, catalyzes the transfer of a dimethylallyl group onto the adenine at position 37 in tRNAs that read codons beginning with uridine, leading to the formation of N6-(dimethylallyl)adenosine (i(6)A). This chain is tRNA dimethylallyltransferase, found in Staphylococcus epidermidis (strain ATCC 35984 / DSM 28319 / BCRC 17069 / CCUG 31568 / BM 3577 / RP62A).